The chain runs to 299 residues: S-methyl-5'-thioadenosine phosphorylase (299 aa).

Phosphate is bound by residues serine 14, 56–57 (RH), and 89–90 (SA). Residue methionine 191 coordinates substrate. Threonine 192 contacts phosphate. Residue 215-217 (DYD) coordinates substrate.

The protein belongs to the PNP/MTAP phosphorylase family. MTAP subfamily. In terms of assembly, homohexamer. Dimer of a homotrimer.

It carries out the reaction S-methyl-5'-thioadenosine + phosphate = 5-(methylsulfanyl)-alpha-D-ribose 1-phosphate + adenine. Its pathway is amino-acid biosynthesis; L-methionine biosynthesis via salvage pathway; S-methyl-5-thio-alpha-D-ribose 1-phosphate from S-methyl-5'-thioadenosine (phosphorylase route): step 1/1. In terms of biological role, catalyzes the reversible phosphorylation of S-methyl-5'-thioadenosine (MTA) to adenine and 5-methylthioribose-1-phosphate. Involved in the breakdown of MTA, a major by-product of polyamine biosynthesis. Responsible for the first step in the methionine salvage pathway after MTA has been generated from S-adenosylmethionine. Has broad substrate specificity with 6-aminopurine nucleosides as preferred substrates. This is S-methyl-5'-thioadenosine phosphorylase from Gloeobacter violaceus (strain ATCC 29082 / PCC 7421).